We begin with the raw amino-acid sequence, 413 residues long: MDFTNLKNTDPELLDMIKKEEERQEYNIELIASENFTSLSVMEAMGSLLTNKYAEGYPHKRYYGGCEFVDEVEDLARERLKKLFAAEHANVQPHSGSQANMAVYMSVLQTGDTILGMDLSHGGHLTHGSPVNFSGKLYNFISYGVDKETETIDYEQLKKIALENRPKMIVSGASAYPRIIDFQKIREICDEIDAYMMVDMAHIAGLVATGLHPSPVPYADFVTTTTHKTLRGPRGGAILCKEKYAKAVDKAIFPGIQGGPLMHTIAAKAVCFGEALREDYKEYMQQVVKNTKVLGEELKNYGFRLISGGTDNHLLLIDLTNKNITGKDAEKLLDSVGITVNKNTIPFETLSPFITSGIRIGTPAVTTRGFKEEEMKKIAYFMNYSIEHREENLSQIKEQIKEICKKYPLHQNA.

(6S)-5,6,7,8-tetrahydrofolate contacts are provided by residues Leu-119 and 123–125; that span reads GHL. Lys-228 is subject to N6-(pyridoxal phosphate)lysine. Position 351 to 353 (351 to 353) interacts with (6S)-5,6,7,8-tetrahydrofolate; it reads SPF.

The protein belongs to the SHMT family. Homodimer. Pyridoxal 5'-phosphate is required as a cofactor.

The protein resides in the cytoplasm. It carries out the reaction (6R)-5,10-methylene-5,6,7,8-tetrahydrofolate + glycine + H2O = (6S)-5,6,7,8-tetrahydrofolate + L-serine. It participates in one-carbon metabolism; tetrahydrofolate interconversion. Its pathway is amino-acid biosynthesis; glycine biosynthesis; glycine from L-serine: step 1/1. In terms of biological role, catalyzes the reversible interconversion of serine and glycine with tetrahydrofolate (THF) serving as the one-carbon carrier. This reaction serves as the major source of one-carbon groups required for the biosynthesis of purines, thymidylate, methionine, and other important biomolecules. Also exhibits THF-independent aldolase activity toward beta-hydroxyamino acids, producing glycine and aldehydes, via a retro-aldol mechanism. This Clostridium botulinum (strain 657 / Type Ba4) protein is Serine hydroxymethyltransferase.